The following is a 269-amino-acid chain: Energy-coupling factor transporter ATP-binding protein EcfA1 (269 aa).

Residues 8–242 (IVFKNVSFQY…AEELTRIGLD (235 aa)) enclose the ABC transporter domain. 42 to 49 (GHNGSGKS) lines the ATP pocket.

It belongs to the ABC transporter superfamily. Energy-coupling factor EcfA family. As to quaternary structure, forms a stable energy-coupling factor (ECF) transporter complex composed of 2 membrane-embedded substrate-binding proteins (S component), 2 ATP-binding proteins (A component) and 2 transmembrane proteins (T component).

It localises to the cell membrane. Functionally, ATP-binding (A) component of a common energy-coupling factor (ECF) ABC-transporter complex. Unlike classic ABC transporters this ECF transporter provides the energy necessary to transport a number of different substrates. The protein is Energy-coupling factor transporter ATP-binding protein EcfA1 of Staphylococcus aureus (strain Mu50 / ATCC 700699).